An 827-amino-acid polypeptide reads, in one-letter code: Centrosomal protein of 95 kDa (827 aa).

5 disordered regions span residues 115 to 145 (ISES…ERTE), 183 to 249 (GDTA…MVPS), 308 to 372 (FLTS…MSEK), 388 to 476 (LGDR…DSCH), and 489 to 558 (ELRK…KASP). Residues 123-145 (SETEQYSKDSHGEEAGEDLERTE) show a composition bias toward basic and acidic residues. Residues 187–199 (HTFSQRSNGAQNS) are compositionally biased toward polar residues. 2 stretches are compositionally biased toward basic and acidic residues: residues 327–343 (EATR…DENR) and 360–372 (PLTE…MSEK). Phosphoserine occurs at positions 447, 449, and 451. Coiled coils occupy residues 584–633 (LTKM…VKKE) and 701–795 (LQIQ…DDDA).

It localises to the cytoplasm. Its subcellular location is the cytoskeleton. The protein localises to the microtubule organizing center. It is found in the centrosome. The protein resides in the spindle pole. The polypeptide is Centrosomal protein of 95 kDa (Cep95) (Mus musculus (Mouse)).